The primary structure comprises 252 residues: MSHQPYFADNHPMTSTLNADPAELAKFSDLAHRWWDLEGEFRPLHQINPLRLEWINHLCPVAGQQVLDVGCGGGILADSMARLGAQVTGIDLASKALRVAQLHALEAQTPNLQYQEISVEALAAQQPGSFDVVTCMEMLEHVPDPASVVRACATLVKPGGWVFFSTLNRSPKSFVLAIVGAEYVLNLLPRGTHEYAKMIRPSELASYCRSVELDLRHTRGMQYNPLTRRYWMSDDTSVNYLFATQKSNAAIL.

The S-adenosyl-L-methionine site is built by Arg51, Gly70, Asp91, and Met136.

The protein belongs to the methyltransferase superfamily. UbiG/COQ3 family.

It carries out the reaction a 3-demethylubiquinol + S-adenosyl-L-methionine = a ubiquinol + S-adenosyl-L-homocysteine + H(+). It catalyses the reaction a 3-(all-trans-polyprenyl)benzene-1,2-diol + S-adenosyl-L-methionine = a 2-methoxy-6-(all-trans-polyprenyl)phenol + S-adenosyl-L-homocysteine + H(+). The protein operates within cofactor biosynthesis; ubiquinone biosynthesis. In terms of biological role, O-methyltransferase that catalyzes the 2 O-methylation steps in the ubiquinone biosynthetic pathway. The polypeptide is Ubiquinone biosynthesis O-methyltransferase (Albidiferax ferrireducens (strain ATCC BAA-621 / DSM 15236 / T118) (Rhodoferax ferrireducens)).